The primary structure comprises 358 residues: Photosystem II protein D1 (358 aa).

3 helical membrane passes run 28–45, 117–132, and 141–155; these read YVGWFGVLMVPTLLAAAI, HFLIGICCWLGRQWEL, and WICVAYSAPLSAAFA. His117 lines the chlorophyll a pocket. Pheophytin a is bound at residue Trp125. The [CaMn4O5] cluster site is built by Asp169 and Glu188. A helical transmembrane segment spans residues 196–217; it reads FHMIGVAGMFGGSLFSAMHGSL. Residue His197 coordinates chlorophyll a. Residues His214 and 263 to 264 contribute to the a quinone site; that span reads SF. His214 contributes to the Fe cation binding site. His271 lines the Fe cation pocket. A helical transmembrane segment spans residues 273-287; that stretch reads FLAAWPVICIWITSL. The [CaMn4O5] cluster site is built by His331, Glu332, Asp341, and Ala343. A propeptide spanning residues 344 to 358 is cleaved from the precursor; it reads AAESTPVALIAPAIG.

This sequence belongs to the reaction center PufL/M/PsbA/D family. PSII is composed of 1 copy each of membrane proteins PsbA, PsbB, PsbC, PsbD, PsbE, PsbF, PsbH, PsbI, PsbJ, PsbK, PsbL, PsbM, PsbT, PsbX, PsbY, Psb30/Ycf12, peripheral proteins PsbO, CyanoQ (PsbQ), PsbU, PsbV and a large number of cofactors. It forms dimeric complexes. It depends on The D1/D2 heterodimer binds P680, chlorophylls that are the primary electron donor of PSII, and subsequent electron acceptors. It shares a non-heme iron and each subunit binds pheophytin, quinone, additional chlorophylls, carotenoids and lipids. D1 provides most of the ligands for the Mn4-Ca-O5 cluster of the oxygen-evolving complex (OEC). There is also a Cl(-1) ion associated with D1 and D2, which is required for oxygen evolution. The PSII complex binds additional chlorophylls, carotenoids and specific lipids. as a cofactor. Tyr-160 forms a radical intermediate that is referred to as redox-active TyrZ, YZ or Y-Z. In terms of processing, C-terminally processed by CtpA; processing is essential to allow assembly of the oxygen-evolving complex and thus photosynthetic growth.

It is found in the cellular thylakoid membrane. It carries out the reaction 2 a plastoquinone + 4 hnu + 2 H2O = 2 a plastoquinol + O2. Functionally, photosystem II (PSII) is a light-driven water:plastoquinone oxidoreductase that uses light energy to abstract electrons from H(2)O, generating O(2) and a proton gradient subsequently used for ATP formation. It consists of a core antenna complex that captures photons, and an electron transfer chain that converts photonic excitation into a charge separation. The D1/D2 (PsbA/PsbD) reaction center heterodimer binds P680, the primary electron donor of PSII as well as several subsequent electron acceptors. This chain is Photosystem II protein D1, found in Prochlorococcus marinus (strain MIT 9313).